The sequence spans 447 residues: C4-dicarboxylate transport protein (447 aa).

Transmembrane regions (helical) follow at residues 21-41, 57-77, 92-112, 141-161, 163-183, 201-221, 232-252, 320-340, 345-365, and 368-388; these read HLYV…YFAP, LVKM…IAGM, IYFL…VNIV, SLIG…LASG, ILQV…VGEA, LVAI…AYTV, LAML…IVLG, IYMT…LSWG, LLAV…AGFV, and AATL…IFGV.

Belongs to the dicarboxylate/amino acid:cation symporter (DAACS) (TC 2.A.23) family.

It localises to the cell inner membrane. In terms of biological role, responsible for the transport of dicarboxylates such as succinate, fumarate, and malate from the periplasm across the membrane. This Granulibacter bethesdensis (strain ATCC BAA-1260 / CGDNIH1) protein is C4-dicarboxylate transport protein.